A 123-amino-acid polypeptide reads, in one-letter code: Ribosome-binding factor A (123 aa).

Belongs to the RbfA family. As to quaternary structure, monomer. Binds 30S ribosomal subunits, but not 50S ribosomal subunits or 70S ribosomes.

The protein localises to the cytoplasm. In terms of biological role, one of several proteins that assist in the late maturation steps of the functional core of the 30S ribosomal subunit. Associates with free 30S ribosomal subunits (but not with 30S subunits that are part of 70S ribosomes or polysomes). Required for efficient processing of 16S rRNA. May interact with the 5'-terminal helix region of 16S rRNA. This is Ribosome-binding factor A from Geotalea daltonii (strain DSM 22248 / JCM 15807 / FRC-32) (Geobacter daltonii).